We begin with the raw amino-acid sequence, 84 residues long: Small ribosomal subunit protein uS17c (84 aa).

The protein belongs to the universal ribosomal protein uS17 family. In terms of assembly, part of the 30S ribosomal subunit.

The protein resides in the plastid. It is found in the chloroplast. Its function is as follows. One of the primary rRNA binding proteins, it binds specifically to the 5'-end of 16S ribosomal RNA. In Phaeodactylum tricornutum (strain CCAP 1055/1), this protein is Small ribosomal subunit protein uS17c (rps17).